A 309-amino-acid polypeptide reads, in one-letter code: Olfactory receptor 8A1 (309 aa).

At 1-28 (MTAENQSTVTEFILGGLTNRPELQLPLF) the chain is on the extracellular side. Residues 29 to 49 (LLFLGIYVVTMVGNLGMITLI) form a helical membrane-spanning segment. The Cytoplasmic segment spans residues 50 to 56 (GLNSQLH). The helical transmembrane segment at 57–77 (TPMYFFLSNLSLVDLCYSSVI) threads the bilayer. The Extracellular segment spans residues 78-90 (TPKMLINFVSQRN). The helical transmembrane segment at 91–111 (LISYVGCMSQLYFFLVFVIAE) threads the bilayer. Cysteine 97 and cysteine 188 are disulfide-bonded. Over 112–133 (CYMLTVMAYDRYVAICQPLLYN) the chain is Cytoplasmic. The chain crosses the membrane as a helical span at residues 134 to 154 (IIMSPALCSLLVAFVYAVGLI). Residues 155-195 (GSAIETGLMLKLNYCEDLISHYFCDILPLMKLSCSSTYDVE) lie on the Extracellular side of the membrane. The helical transmembrane segment at 196–216 (MAVFFLAGFDIIVTSLTVLIS) threads the bilayer. The Cytoplasmic segment spans residues 217–238 (YAFILSSILRISSNEGRSKAFS). A helical transmembrane segment spans residues 239–259 (TCSSHFAAVGLFYGSTAFMYL). The Extracellular portion of the chain corresponds to 260–270 (KPSTASSLAQE). Residues 271 to 291 (NVASVFYTTVIPMFNPLIYSL) form a helical membrane-spanning segment. The Cytoplasmic portion of the chain corresponds to 292-309 (RNKEVKTALDKTLRRKVF).

The protein belongs to the G-protein coupled receptor 1 family.

It is found in the cell membrane. In terms of biological role, odorant receptor. The chain is Olfactory receptor 8A1 from Mus musculus (Mouse).